The chain runs to 596 residues: Dihydroxy-acid dehydratase pbrD, mitochondrial (596 aa).

The N-terminal 18 residues, 1–18 (MATSSIRSRALGLSRRAR), are a transit peptide targeting the mitochondrion. Position 84 (C84) interacts with [2Fe-2S] cluster. D116 is a Mg(2+) binding site. C157 is a [2Fe-2S] cluster binding site. D158 lines the Mg(2+) pocket. C230 is a [2Fe-2S] cluster binding site. Position 483 (E483) interacts with Mg(2+). The active-site Proton acceptor is S509.

This sequence belongs to the IlvD/Edd family. [2Fe-2S] cluster serves as cofactor. Requires Mg(2+) as cofactor.

The protein localises to the mitochondrion. The enzyme catalyses (2R)-2,3-dihydroxy-3-methylbutanoate = 3-methyl-2-oxobutanoate + H2O. It catalyses the reaction (2R,3R)-2,3-dihydroxy-3-methylpentanoate = (S)-3-methyl-2-oxopentanoate + H2O. The protein operates within amino-acid biosynthesis; L-isoleucine biosynthesis; L-isoleucine from 2-oxobutanoate: step 3/4. Its pathway is amino-acid biosynthesis; L-valine biosynthesis; L-valine from pyruvate: step 3/4. Its activity is regulated as follows. DHAD activity is not inhibited by the dihydroxyacid dehydratase inhibitor aspterric acid (AA). Its function is as follows. Dihydroxyacid dehydratase; part of the gene cluster that mediates the biosynthesis of the sesquiterpenoid aspterric acid (AA), an inhibitor of dihydroxy-acid dehydratase (DHAD) effective as an herbicide. Performs the third step in the common pathway leading to biosynthesis of branched-chain amino acids. Catalyzes the dehydration of (2R,3R)-2,3-dihydroxy-3-methylpentanoate (2,3-dihydroxy-3-methylvalerate) into 2-oxo-3-methylpentanoate (2-oxo-3-methylvalerate) and of (2R)-2,3-dihydroxy-3-methylbutanoate (2,3-dihydroxyisovalerate) into 2-oxo-3-methylbutanoate (2-oxoisovalerate), the penultimate precursor to L-isoleucine and L-valine, respectively. PbrD confers self-resistance in the presence of the dihydroxyacid dehydratase inhibitor aspterric acid (AA) produced by the ast cluster. The polypeptide is Dihydroxy-acid dehydratase pbrD, mitochondrial (Penicillium brasilianum).